A 596-amino-acid chain; its full sequence is Zinc finger CCCH domain-containing protein 64 (596 aa).

2 disordered regions span residues leucine 243 to threonine 263 and aspartate 272 to tryptophan 291. 2 consecutive C3H1-type zinc fingers follow at residues serine 303–glutamate 331 and glutamine 335–glutamine 363.

The chain is Zinc finger CCCH domain-containing protein 64 from Arabidopsis thaliana (Mouse-ear cress).